A 342-amino-acid chain; its full sequence is Phosphate acyltransferase (342 aa).

It belongs to the PlsX family. Homodimer. Probably interacts with PlsY.

The protein localises to the cytoplasm. It carries out the reaction a fatty acyl-[ACP] + phosphate = an acyl phosphate + holo-[ACP]. The protein operates within lipid metabolism; phospholipid metabolism. Catalyzes the reversible formation of acyl-phosphate (acyl-PO(4)) from acyl-[acyl-carrier-protein] (acyl-ACP). This enzyme utilizes acyl-ACP as fatty acyl donor, but not acyl-CoA. The chain is Phosphate acyltransferase from Shewanella baltica (strain OS155 / ATCC BAA-1091).